The chain runs to 359 residues: Alanine racemase, biosynthetic (359 aa).

K34 acts as the Proton acceptor; specific for D-alanine in catalysis. Position 34 is an N6-(pyridoxal phosphate)lysine (K34). Position 129 (R129) interacts with substrate. Catalysis depends on Y255, which acts as the Proton acceptor; specific for L-alanine. M303 contacts substrate.

This sequence belongs to the alanine racemase family. It depends on pyridoxal 5'-phosphate as a cofactor.

The catalysed reaction is L-alanine = D-alanine. Its pathway is amino-acid biosynthesis; D-alanine biosynthesis; D-alanine from L-alanine: step 1/1. It functions in the pathway cell wall biogenesis; peptidoglycan biosynthesis. In terms of biological role, catalyzes the interconversion of L-alanine and D-alanine. Provides the D-alanine required for cell wall biosynthesis. This chain is Alanine racemase, biosynthetic (alr), found in Escherichia coli O157:H7.